The chain runs to 125 residues: Mitochondrial import inner membrane translocase subunit TIM16 (125 aa).

Residues 58–110 (EAQQILNVSKLSPEEVQKNYEHLFKVNDKSVGGSFYLQSKVVRAKERLDEELR) form a J-like region. Ser69 is subject to Phosphoserine.

It belongs to the TIM16/PAM16 family. As to quaternary structure, probable component of the PAM complex at least composed of a mitochondrial HSP70 protein, GRPEL1 or GRPEL2, TIMM44, TIMM16/PAM16 and TIMM14/DNAJC19. Interacts with DNAJC19. Directly interacts with DNAJC15; this interaction counteracts DNAJC15-dependent stimulation of HSPA9 ATPase activity. Associates with the TIM23 complex. As to expression, expressed in trabecular bone and cartilage and by differentiated chondrocytes localized in the hypertrophic zone and by osteoblasts at early developmental stages.

The protein resides in the mitochondrion inner membrane. Regulates ATP-dependent protein translocation into the mitochondrial matrix. Inhibits DNAJC19 stimulation of HSPA9/Mortalin ATPase activity. This is Mitochondrial import inner membrane translocase subunit TIM16 from Mus musculus (Mouse).